We begin with the raw amino-acid sequence, 312 residues long: Methionyl-tRNA formyltransferase (312 aa).

112–115 (SLLP) is a binding site for (6S)-5,6,7,8-tetrahydrofolate.

The protein belongs to the Fmt family.

It catalyses the reaction L-methionyl-tRNA(fMet) + (6R)-10-formyltetrahydrofolate = N-formyl-L-methionyl-tRNA(fMet) + (6S)-5,6,7,8-tetrahydrofolate + H(+). In terms of biological role, attaches a formyl group to the free amino group of methionyl-tRNA(fMet). The formyl group appears to play a dual role in the initiator identity of N-formylmethionyl-tRNA by promoting its recognition by IF2 and preventing the misappropriation of this tRNA by the elongation apparatus. This chain is Methionyl-tRNA formyltransferase, found in Dehalococcoides mccartyi (strain ATCC BAA-2266 / KCTC 15142 / 195) (Dehalococcoides ethenogenes (strain 195)).